The primary structure comprises 734 residues: DNA replication licensing factor MCM5 (734 aa).

At S2 the chain carries N-acetylserine. The 207-residue stretch at 331 to 537 (IYELISKSIA…RDVMLAKHVI (207 aa)) folds into the MCM domain. ADP is bound at residue R371. 2 positions are modified to N6-acetyllysine: K392 and K396. Residues 512–515 (SRFD) carry the Arginine finger motif. Phosphoserine is present on S605.

The protein belongs to the MCM family. Component of the MCM2-7 complex. The complex forms a toroidal hexameric ring with the proposed subunit order MCM2-MCM6-MCM4-MCM7-MCM3-MCM5. Component of the CMG helicase complex, a hexameric ring of related MCM2-7 subunits stabilized by CDC45 and the tetrameric GINS complex. Interacts with ANKRD17. Interacts with MCMBP. Interacts with TONSL; the interaction is direct.

The protein resides in the nucleus. It localises to the chromosome. Its subcellular location is the cytoplasm. It is found in the cytosol. It carries out the reaction ATP + H2O = ADP + phosphate + H(+). Acts as a component of the MCM2-7 complex (MCM complex) which is the replicative helicase essential for 'once per cell cycle' DNA replication initiation and elongation in eukaryotic cells. Core component of CDC45-MCM-GINS (CMG) helicase, the molecular machine that unwinds template DNA during replication, and around which the replisome is built. The active ATPase sites in the MCM2-7 ring are formed through the interaction surfaces of two neighboring subunits such that a critical structure of a conserved arginine finger motif is provided in trans relative to the ATP-binding site of the Walker A box of the adjacent subunit. The six ATPase active sites, however, are likely to contribute differentially to the complex helicase activity. The sequence is that of DNA replication licensing factor MCM5 from Bos taurus (Bovine).